We begin with the raw amino-acid sequence, 617 residues long: Hemagglutinin glycoprotein (617 aa).

The Intravirion segment spans residues 1–37; that stretch reads MSPQRDRINAFYKDNPHPKGSRIVINREHLMIDRPYV. Residues 1 to 154 form a stalk region; the sequence is MSPQRDRINA…RIKLDYDQYC (154 aa). The chain crosses the membrane as a helical; Signal-anchor for type II membrane protein span at residues 38–58; it reads LLAVLFVMFLSLIGLLAIAGI. Over 59–617 the chain is Virion surface; the sequence is RLHRAAIYTA…VTREDGTNRR (559 aa). N-linked (GlcNAc...) asparagine; by host glycans are attached at residues Asn168, Asn187, Asn200, Asn215, and Asn238. 5 disulfide bridges follow: Cys188–Cys606, Cys287–Cys300, Cys381–Cys494, Cys386–Cys394, and Cys570–Cys579. The segment at 458 to 543 is interaction with host NECTIN4 receptor; it reads PMKNLALGVI…VEHAVVYYVY (86 aa).

Belongs to the paramyxoviruses hemagglutinin-neuraminidase family. Non-sialidase subfamily. As to quaternary structure, homodimer; disulfide-linked. Further forms homotetramer (dimer of dimers). Interacts (via C-terminus) with human NECTIN4 (via N-terminus); this interaction allows attachment to the respiratory epithelium and viral entry. Interacts (via C-terminus) with human SLAMF1/CD150 (via N-terminus); this interaction allows attachment and viral entry into the CD150-expressing immune cells. Interacts with human CD46 antigen (via N-terminus); this interaction allows attachment and viral entry of vaccine and laboratory-adapted strains.

It is found in the virion membrane. The protein localises to the host cell membrane. In terms of biological role, attaches the virus to the human SLAMF1/CD150 receptor for entry into host dendritic cells, macrophages, activated memory T cells and naive or memory B cells, thereby explaining the long immunosuppression that follows infection. In the respiratory airways, binds to the NECTIN4 receptor for entry into the host cell. Binding of H protein to the receptor induces a conformational change that allows the F protein to trigger virion/cell membranes fusion. The vaccine and laboratory-adapted strains use host CD46 as an alternate receptor. The high degree of interaction between H and CD46 results in down-regulation of the latter from the surface of infected cells, rendering them more sensitive to c3b-mediated complement lysis. The chain is Hemagglutinin glycoprotein (H) from Measles virus (strain Edmonston) (MeV).